The sequence spans 717 residues: Probable inactive histone-lysine N-methyltransferase SUVR2 (717 aa).

Residues Q61–E73 show a composition bias toward basic and acidic residues. The disordered stretch occupies residues Q61–S136. Over residues S120–P130 the composition is skewed to low complexity. Positions 445, 446, 449, 453, 462, 529, 533, 535, and 539 each coordinate Zn(2+). A Pre-SET domain is found at M458–G547. The SET domain maps to N550–G679. S-adenosyl-L-methionine-binding positions include R561–W563 and N635–H636. C638 serves as a coordination point for Zn(2+). Y678 is a binding site for S-adenosyl-L-methionine. Residues S690–Q706 form the Post-SET domain. Zn(2+)-binding residues include C694, C696, and C701.

It belongs to the class V-like SAM-binding methyltransferase superfamily. Histone-lysine methyltransferase family. As to quaternary structure, interacts with SUVR1, CHR19, CHR28 and itself. Interacts with CHR27.

Its subcellular location is the nucleus. The protein resides in the chromosome. Functionally, probable inactive histone-lysine methyltransferase that acts as regulator of transctiptional gene silencing independently of histone H3K9 methylation. Contributes to transcriptional gene silencing at RNA-directed DNA methylation (RdDM) target loci but also at RdDM-independent target loci. Forms a complex with SUVR1 and associates with the SNF2-related chromatin-remodeling proteins CHR19, CHR27, and CHR28, thereby mediating nucleosome positioning and transcriptional silencing. Does not possess histone-lysine methyltransferase activity in vitro, and the conserved catalytic sites of SUVR2 are dispensable for its function in transcriptional gene silencing. This Arabidopsis thaliana (Mouse-ear cress) protein is Probable inactive histone-lysine N-methyltransferase SUVR2 (SUVR2).